Reading from the N-terminus, the 344-residue chain is MMSLTITRPDDWHVHLRDGIQLNDTVRDISRYMGRAIIMPNLMPPATCTDTALAYRERIVAAKTPDNQFEPLMVLYLTDNTSPDEIRKAKATGLIHAAKLYPAGATTNSDSGVTSISNLYPVLEAMAEVGMLLLVHGEVTDSSIDIFDREKVFLETILAQVVTDFPKLKIVLEHITTSDAVEFVNKAPDNVAATITAHHLLYNRNHMLAGGIRPHFYCLPILKRNTHQQALIAAATSGSKKFFLGTDSAPHLKDKKEASCGCAGSYTAHAAIELYAEAFEAAGALDKLEAFASFYGADFYGLPRNTDTITLEKTPWQVPDSYPLANDRVVPIRAGEMLDWQVIS.

Zn(2+)-binding residues include histidine 13 and histidine 15. Residues 15 to 17 (HLR) and asparagine 41 contribute to the substrate site. The Zn(2+) site is built by lysine 99, histidine 136, and histidine 174. Lysine 99 carries the N6-carboxylysine modification. Residue histidine 136 participates in substrate binding. Substrate is bound at residue leucine 219. Aspartate 247 provides a ligand contact to Zn(2+). The active site involves aspartate 247. Positions 251 and 263 each coordinate substrate.

The protein belongs to the metallo-dependent hydrolases superfamily. DHOase family. Class II DHOase subfamily. In terms of assembly, homodimer. Requires Zn(2+) as cofactor.

It catalyses the reaction (S)-dihydroorotate + H2O = N-carbamoyl-L-aspartate + H(+). It participates in pyrimidine metabolism; UMP biosynthesis via de novo pathway; (S)-dihydroorotate from bicarbonate: step 3/3. Functionally, catalyzes the reversible cyclization of carbamoyl aspartate to dihydroorotate. The polypeptide is Dihydroorotase (Shewanella denitrificans (strain OS217 / ATCC BAA-1090 / DSM 15013)).